The sequence spans 103 residues: Putative glutaredoxin-C14 (103 aa).

One can recognise a Glutaredoxin domain in the interval 1–102 (MDRVMKLASE…PMLKNAGALW (102 aa)). C21 and C24 are oxidised to a cystine. A Responsive for interaction with TGA factors motif is present at residues 100-103 (ALWL).

This sequence belongs to the glutaredoxin family. CC-type subfamily.

It is found in the cytoplasm. The protein resides in the nucleus. Functionally, has a glutathione-disulfide oxidoreductase activity in the presence of NADPH and glutathione reductase. Reduces low molecular weight disulfides and proteins. This Oryza sativa subsp. japonica (Rice) protein is Putative glutaredoxin-C14 (GRXC14).